Consider the following 464-residue polypeptide: NADH-quinone oxidoreductase subunit N (464 aa).

The next 13 membrane-spanning stretches (helical) occupy residues 5–25 (MLLALLPLLVLFGGSITVLFL), 31–51 (LLSAAMCAVVAAGFAWWPASL), 63–83 (LFARGCLTLWALLGAATCLLS), 96–116 (EYAALTLFAVLGMAILSASTS), 117–137 (LVSLFLGLESMTLAFYVLIAV), 152–172 (LLPGFLASALLAFGIALVYAA), 188–208 (GAPMPSIALLGWTLIMAAAAF), 242–262 (VFAVLLGSAPLALIVPLRPLL), 286–303 (MLAYSSVVHMGYLVLAVL), 312–332 (AGLFYLLTYSAATVGTFGLLA), 358–378 (AVLLTGLLLSLAGFPPLAGFM), 393–415 (VGLVVLALLSSLISCYYYLRPVL), and 436–456 (LIFVLCAGVTLVAGLYPGPFF).

It belongs to the complex I subunit 2 family. In terms of assembly, NDH-1 is composed of 14 different subunits. Subunits NuoA, H, J, K, L, M, N constitute the membrane sector of the complex.

The protein localises to the cell inner membrane. The enzyme catalyses a quinone + NADH + 5 H(+)(in) = a quinol + NAD(+) + 4 H(+)(out). In terms of biological role, NDH-1 shuttles electrons from NADH, via FMN and iron-sulfur (Fe-S) centers, to quinones in the respiratory chain. The immediate electron acceptor for the enzyme in this species is believed to be ubiquinone. Couples the redox reaction to proton translocation (for every two electrons transferred, four hydrogen ions are translocated across the cytoplasmic membrane), and thus conserves the redox energy in a proton gradient. The protein is NADH-quinone oxidoreductase subunit N of Syntrophotalea carbinolica (strain DSM 2380 / NBRC 103641 / GraBd1) (Pelobacter carbinolicus).